A 359-amino-acid chain; its full sequence is 4-hydroxy-2-oxovalerate aldolase 1 (359 aa).

One can recognise a Pyruvate carboxyltransferase domain in the interval 23–275 (VRVTDTSLRD…KTGIDFFDIA (253 aa)). 31–32 (RD) serves as a coordination point for substrate. D32 serves as a coordination point for Mn(2+). H35 functions as the Proton acceptor in the catalytic mechanism. Residues S185 and H214 each coordinate substrate. Mn(2+) contacts are provided by H214 and H216. Y305 serves as a coordination point for substrate.

It belongs to the 4-hydroxy-2-oxovalerate aldolase family.

The enzyme catalyses (S)-4-hydroxy-2-oxopentanoate = acetaldehyde + pyruvate. This is 4-hydroxy-2-oxovalerate aldolase 1 from Mycobacteroides abscessus (strain ATCC 19977 / DSM 44196 / CCUG 20993 / CIP 104536 / JCM 13569 / NCTC 13031 / TMC 1543 / L948) (Mycobacterium abscessus).